Consider the following 435-residue polypeptide: Methionine aminopeptidase 2 (435 aa).

The tract at residues 57–77 (AIDGDQAAAKKKKSKKKKKKA) is disordered. The segment covering 65–77 (AKKKKSKKKKKKA) has biased composition (basic residues). His-188 contacts substrate. A divalent metal cation contacts are provided by Asp-208, Asp-219, and His-288. Position 296 (His-296) interacts with substrate. The a divalent metal cation site is built by Glu-321 and Glu-416.

Belongs to the peptidase M24A family. Methionine aminopeptidase eukaryotic type 2 subfamily. Co(2+) is required as a cofactor. It depends on Zn(2+) as a cofactor. The cofactor is Mn(2+). Fe(2+) serves as cofactor.

The protein resides in the cytoplasm. It carries out the reaction Release of N-terminal amino acids, preferentially methionine, from peptides and arylamides.. Cotranslationally removes the N-terminal methionine from nascent proteins. The N-terminal methionine is often cleaved when the second residue in the primary sequence is small and uncharged (Met-Ala-, Cys, Gly, Pro, Ser, Thr, or Val). This is Methionine aminopeptidase 2 from Clavispora lusitaniae (strain ATCC 42720) (Yeast).